The following is a 562-amino-acid chain: Arf-GAP domain and FG repeat-containing protein 1 (562 aa).

The Arf-GAP domain maps to 11–135 (EKHLKMLRDM…WYVPPEQAKV (125 aa)). A C4-type zinc finger spans residues 29-52 (CFDCDQRGPTYVNMTVGSFVCTSC). Serine 167 bears the Phosphoserine mark. Residues 168-194 (APALHLNKGTPSQSPVVGRSQAQQQEK) are disordered. Residues 176–191 (GTPSQSPVVGRSQAQQ) are compositionally biased toward polar residues. The residue at position 177 (threonine 177) is a Phosphothreonine. Residues serine 181 and serine 362 each carry the phosphoserine modification. O-linked (GlcNAc) serine glycosylation is present at serine 367.

As to quaternary structure, interacts with EPS15R and EPS15. Interacts with FCHO1. O-glycosylated.

The protein resides in the nucleus. It localises to the cytoplasmic vesicle. In terms of biological role, required for vesicle docking or fusion during acrosome biogenesis. May play a role in RNA trafficking or localization. This chain is Arf-GAP domain and FG repeat-containing protein 1 (AGFG1), found in Bos taurus (Bovine).